A 332-amino-acid chain; its full sequence is Methionine synthase (332 aa).

3 residues coordinate Zn(2+): His-211, Cys-213, and Cys-296.

The protein belongs to the archaeal MetE family. Requires Zn(2+) as cofactor.

The protein operates within amino-acid biosynthesis; L-methionine biosynthesis via de novo pathway. Functionally, catalyzes the transfer of a methyl group to L-homocysteine resulting in methionine formation. The physiological methyl donor is unknown. This is Methionine synthase from Saccharolobus solfataricus (strain ATCC 35092 / DSM 1617 / JCM 11322 / P2) (Sulfolobus solfataricus).